We begin with the raw amino-acid sequence, 294 residues long: DEP domain-containing protein 4 (294 aa).

The DEP domain occupies 71–162; sequence LQAQVEIKRR…SNISLYRFLG (92 aa).

The sequence is that of DEP domain-containing protein 4 (DEPDC4) from Homo sapiens (Human).